A 382-amino-acid polypeptide reads, in one-letter code: MTPIPDPAQLTARLIRCASVTPDEGGALVLLADVLGAAGFECHRVDREGVPNLFARWGAQGARTFGFNGHTDVVPPGDPASWTHPPFSGHEAEGWIWGRGATDMKSGVAAFAAAAIGFVTQTPPPDGAVILAITGDEEGPGKHGTRALLDWMAARGERMDVCIVGEPSNPDRMGEMIKIGRRGSMTLQIEAHGIQGHAAYPHRARNPIHALLRLLHELTDAPLDEGTEHFDPSGLQVTTVDCGNPASNVIPERARAVINIRFNDAHTAESLDRMIRARAAAISAETKVDFAISTDVSGESFLTAPGPFVDLVAGVVREETGLDPVLSTSGGTSDARFVKDHCPVLEFGLVGHFMHQVDERVPADQVRQLARIYRRILERYFA.

His-70 contacts Zn(2+). Residue Asp-72 is part of the active site. Asp-103 is a binding site for Zn(2+). The active-site Proton acceptor is the Glu-137. Residues Glu-138, Glu-166, and His-355 each contribute to the Zn(2+) site.

This sequence belongs to the peptidase M20A family. DapE subfamily. Homodimer. The cofactor is Zn(2+). Co(2+) serves as cofactor.

It catalyses the reaction N-succinyl-(2S,6S)-2,6-diaminopimelate + H2O = (2S,6S)-2,6-diaminopimelate + succinate. It participates in amino-acid biosynthesis; L-lysine biosynthesis via DAP pathway; LL-2,6-diaminopimelate from (S)-tetrahydrodipicolinate (succinylase route): step 3/3. Its function is as follows. Catalyzes the hydrolysis of N-succinyl-L,L-diaminopimelic acid (SDAP), forming succinate and LL-2,6-diaminopimelate (DAP), an intermediate involved in the bacterial biosynthesis of lysine and meso-diaminopimelic acid, an essential component of bacterial cell walls. This Paracoccus denitrificans (strain Pd 1222) protein is Succinyl-diaminopimelate desuccinylase.